We begin with the raw amino-acid sequence, 335 residues long: Stearoyl-CoA desaturase 5 (335 aa).

Over 1-54 (MPGPAVDAEKVPFRSAKEEIRAGVGVEGSEGGGGGGGRERPGARGHRQDIVWRN) the chain is Cytoplasmic. The interval 24–44 (VGVEGSEGGGGGGGRERPGAR) is disordered. The segment covering 25–36 (GVEGSEGGGGGG) has biased composition (gly residues). Asn-54 contacts substrate. The helical transmembrane segment at 55–75 (VFLMSLLHLAAVYSLVLIPKA) threads the bilayer. Over 76–77 (QP) the chain is Lumenal. A helical membrane pass occupies residues 78–98 (LTLLWAYFCFLLTALGVTAGA). Residues His-99 and His-104 each coordinate Fe cation. Residues 99–104 (HRLWSH) carry the Histidine box-1 motif. Topologically, residues 99–198 (HRLWSHRSYK…VVRFQRKYYK (100 aa)) are cytoplasmic. Substrate-binding residues include Asn-127, Arg-134, and Asp-135. Fe cation contacts are provided by His-136, His-139, and His-140. The short motif at 136-140 (HRVHH) is the Histidine box-2 element. Substrate contacts are provided by Arg-167 and Lys-168. Residues 199-219 (ITVVLMCFVVPTLVPWYIWGE) traverse the membrane as a helical segment. The Lumenal segment spans residues 220–227 (SLWNSYFL). A helical membrane pass occupies residues 228 to 247 (ASILRYTISLNVTWLVNSVA). Trp-241 contacts substrate. Positions 248, 277, 280, and 281 each coordinate Fe cation. Topologically, residues 248 to 335 (HMYGNRPYDK…RKARTGDGSA (88 aa)) are cytoplasmic. The Histidine box-3 signature appears at 277–281 (HNYHH).

The protein belongs to the fatty acid desaturase type 1 family. As to quaternary structure, may self-associate and form homodimers. Requires Fe(2+) as cofactor. As to expression, detected in brain.

It is found in the endoplasmic reticulum membrane. It carries out the reaction octadecanoyl-CoA + 2 Fe(II)-[cytochrome b5] + O2 + 2 H(+) = (9Z)-octadecenoyl-CoA + 2 Fe(III)-[cytochrome b5] + 2 H2O. The catalysed reaction is hexadecanoyl-CoA + 2 Fe(II)-[cytochrome b5] + O2 + 2 H(+) = (9Z)-hexadecenoyl-CoA + 2 Fe(III)-[cytochrome b5] + 2 H2O. Its function is as follows. Stearoyl-CoA desaturase that utilizes O(2) and electrons from reduced cytochrome b5 to introduce the first double bond into saturated fatty acyl-CoA substrates. Catalyzes the insertion of a cis double bond at the delta-9 position into fatty acyl-CoA substrates including palmitoyl-CoA and stearoyl-CoA. Gives rise to a mixture of 16:1 and 18:1 unsaturated fatty acids. Involved in neuronal cell proliferation and differentiation through down-regulation of EGFR/AKT/MAPK and Wnt signaling pathways. This is Stearoyl-CoA desaturase 5 (SCD5) from Bos taurus (Bovine).